Here is a 479-residue protein sequence, read N- to C-terminus: ATP-dependent protease ATPase subunit HslU (479 aa).

Residues Ile32, 74 to 79 (GVGKTE), Asp290, Glu355, and Arg427 each bind ATP.

Belongs to the ClpX chaperone family. HslU subfamily. A double ring-shaped homohexamer of HslV is capped on each side by a ring-shaped HslU homohexamer. The assembly of the HslU/HslV complex is dependent on binding of ATP.

The protein resides in the cytoplasm. ATPase subunit of a proteasome-like degradation complex; this subunit has chaperone activity. The binding of ATP and its subsequent hydrolysis by HslU are essential for unfolding of protein substrates subsequently hydrolyzed by HslV. HslU recognizes the N-terminal part of its protein substrates and unfolds these before they are guided to HslV for hydrolysis. The chain is ATP-dependent protease ATPase subunit HslU from Leptospira interrogans serogroup Icterohaemorrhagiae serovar copenhageni (strain Fiocruz L1-130).